A 744-amino-acid chain; its full sequence is Palmitoyltransferase ZDHHC5-A (744 aa).

Over residues 1–11 (MPSGSMSGGVS) the composition is skewed to gly residues. A disordered region spans residues 1 to 25 (MPSGSMSGGVSGPTSPPHPTVPSRP). Residues 1-30 (MPSGSMSGGVSGPTSPPHPTVPSRPLRPSR) lie on the Cytoplasmic side of the membrane. The helical transmembrane segment at 31–51 (YVPVSAATAFLVGSTTLFFCF) threads the bilayer. Over 52–61 (TCPWLSEQFS) the chain is Extracellular. Residues 62-82 (VAVPIYNGVMFMFVLANFCMA) traverse the membrane as a helical segment. Topologically, residues 83–167 (TFMDPGIFPR…IGRRNYRYFF (85 aa)) are cytoplasmic. The DHHC domain occupies 121 to 171 (KWCSTCRFYRPPRCSHCSVCDNCVEDFDHHCPWVNNCIGRRNYRYFFLFLL). Catalysis depends on cysteine 151, which acts as the S-palmitoyl cysteine intermediate. Residues 168-188 (LFLLSLTAHIMGVFGFGLLFI) form a helical membrane-spanning segment. The Extracellular portion of the chain corresponds to 189–208 (LYHTQQLDRVHSAVTMAVMC). Residues 209 to 229 (VAGLFFIPVAGLTGFHVVLVA) traverse the membrane as a helical segment. At 230–744 (RGRTTNEQVT…VGGTTYEISV (515 aa)) the chain is on the cytoplasmic side. Disordered stretches follow at residues 314–523 (SLEM…PVVG), 556–645 (QHAV…SLSY), and 664–744 (SVAG…EISV). The span at 369-393 (TYSSPGKNHTALTHAYANQSSQQPG) shows a compositional bias: polar residues. Residues 398 to 413 (PSLDGREGGGAERSGA) are compositionally biased toward basic and acidic residues. The segment covering 415-428 (RTGGGPGGPPGSGI) has biased composition (gly residues). The span at 460 to 501 (THNAPPSEATTSTSYKSLANQTPPQAARNGSLSYDSLLTPSE) shows a compositional bias: polar residues. The segment covering 571 to 584 (PERERERLLHDSQA) has biased composition (basic and acidic residues). The segment covering 585-601 (QHHHHHHHHHHHHRPPR) has biased composition (basic residues). 2 stretches are compositionally biased toward low complexity: residues 621–630 (RTRSTDTTHP) and 689–723 (PKPS…SPAH). Positions 725–737 (PGGGVKKVTGVGG) are enriched in gly residues.

It belongs to the DHHC palmitoyltransferase family. ERF2/ZDHHC9 subfamily.

Its subcellular location is the cell membrane. It catalyses the reaction L-cysteinyl-[protein] + hexadecanoyl-CoA = S-hexadecanoyl-L-cysteinyl-[protein] + CoA. Functionally, palmitoyltransferase that catalyzes the addition of palmitate onto various protein substrates and is involved in a variety of cellular processes. The chain is Palmitoyltransferase ZDHHC5-A from Danio rerio (Zebrafish).